The chain runs to 209 residues: Phosphoheptose isomerase (209 aa).

In terms of domain architecture, SIS spans 50–209 (IADTFREGGK…ELVEKMMGYD (160 aa)). 65 to 67 (NGG) provides a ligand contact to substrate. Positions 74 and 78 each coordinate Zn(2+). Substrate contacts are provided by residues Glu78, 109-110 (ND), 135-137 (STS), Ser140, and Gln188. Residues Gln188 and His196 each contribute to the Zn(2+) site.

Belongs to the SIS family. GmhA subfamily. The cofactor is Zn(2+).

The protein localises to the cytoplasm. The enzyme catalyses 2 D-sedoheptulose 7-phosphate = D-glycero-alpha-D-manno-heptose 7-phosphate + D-glycero-beta-D-manno-heptose 7-phosphate. Its pathway is carbohydrate biosynthesis; D-glycero-D-manno-heptose 7-phosphate biosynthesis; D-glycero-alpha-D-manno-heptose 7-phosphate and D-glycero-beta-D-manno-heptose 7-phosphate from sedoheptulose 7-phosphate: step 1/1. In terms of biological role, catalyzes the isomerization of sedoheptulose 7-phosphate in D-glycero-D-manno-heptose 7-phosphate. This Chlorobaculum tepidum (strain ATCC 49652 / DSM 12025 / NBRC 103806 / TLS) (Chlorobium tepidum) protein is Phosphoheptose isomerase.